Consider the following 1498-residue polypeptide: Golgin subfamily A member 3 (1498 aa).

Methionine 1 is subject to N-acetylmethionine. Positions 1–118 are disordered; it reads MDGASAEQDG…GTSAEGSVRK (118 aa). Residue serine 18 is modified to Phosphoserine. Pro residues predominate over residues 27 to 36; sequence PLKPPGPLVP. Serine 57 is modified (phosphoserine). Residues 71–81 show a composition bias toward pro residues; that stretch reads PTPPFPDPPSS. The interaction with GOPC stretch occupies residues 121–141; that stretch reads LQSLRLSLPMQETQLCSTDSP. 2 disordered regions span residues 166–195 and 216–325; these read RVKR…MLNP and SVPR…SAST. Positions 172–257 are golgi-targeting domain; sequence ERSSQPATKT…DYRTEDSNAG (86 aa). Composition is skewed to polar residues over residues 173–184 and 269–291; these read RSSQPATKTRLF and TKGS…SLSP. Serine 272 carries the post-translational modification Phosphoserine. Positions 315-324 are enriched in low complexity; it reads SDSSSYSSAS. Residues serine 385, serine 389, and serine 465 each carry the phosphoserine modification. Residues 394–1459 adopt a coiled-coil conformation; the sequence is VSLESSAAET…ALTVHESLSS (1066 aa). Over residues 789–801 the composition is skewed to basic and acidic residues; it reads KEELDRGARRLEE. Disordered stretches follow at residues 789–809, 974–993, 1376–1400, and 1440–1498; these read KEEL…TSET, QKQK…KEMK, RGAA…PIKI, and DSLQ…GPGE. Serine 983 carries the post-translational modification Phosphoserine. A compositionally biased stretch (basic and acidic residues) spans 1376–1387; the sequence is RGAAKTRKEPKG. Position 1392 is a phosphoserine (serine 1392). Over residues 1440 to 1452 the composition is skewed to basic and acidic residues; sequence DSLQRQMEEHALT.

Homodimer. Interacts with GOLGA7. Isoform 1 interacts with GOPC while isoform 3 does not. Post-translationally, cleaved by caspases in apoptotic cells. Expressed in all tissues tested. Expressed in liver, testis, lung, heart, salivary gland and kidney.

It is found in the cytoplasm. It localises to the golgi apparatus. Its subcellular location is the golgi stack membrane. Golgi auto-antigen; probably involved in maintaining Golgi structure. This is Golgin subfamily A member 3 (GOLGA3) from Homo sapiens (Human).